We begin with the raw amino-acid sequence, 714 residues long: Cyclomaltodextrin glucanotransferase (714 aa).

A signal peptide spans 1-27 (MKSRYKRLTSLALSLSMALGISLPAWA). The A1 stretch occupies residues 28–165 (SPDTSVDNKV…NIKVVIDFAP (138 aa)). 5 residues coordinate Ca(2+): Asp-54, Asn-59, Asn-60, Gly-78, and Asp-80. A substrate-binding site is contributed by 127 to 128 (YW). Asn-166 lines the Ca(2+) pocket. The segment at 166 to 229 (NHTSPADRDN…NLYDLADINH (64 aa)) is b. His-167 provides a ligand contact to substrate. Residue Ile-217 coordinates Ca(2+). 220–223 (NLYD) is a binding site for substrate. Ca(2+) is bound at residue Asp-226. The interval 230–434 (NNNAMDAYFK…LRKSNPAIAY (205 aa)) is A2. Arg-254 is a binding site for substrate. Asp-256 serves as the catalytic Nucleophile. Residue 259 to 260 (KH) coordinates substrate. Position 260 (His-260) interacts with Ca(2+). Residue Glu-285 is the Proton donor of the active site. Substrate is bound by residues His-355, Asp-399, and Arg-403. The tract at residues 435–523 (GTTTERWVNN…GTAVWQYTAP (89 aa)) is c. The interval 524 to 610 (ETSPAIGNVG…SNTFKSFNVL (87 aa)) is d. The region spanning 527–607 (PAIGNVGPTM…GTASNTFKSF (81 aa)) is the IPT/TIG domain. A CBM20 domain is found at 609 to 714 (VLTGDQVTVR…VGTVTVDWQN (106 aa)). The e stretch occupies residues 611 to 714 (TGDQVTVRFL…VGTVTVDWQN (104 aa)).

It belongs to the glycosyl hydrolase 13 family. In terms of assembly, monomer. It depends on Ca(2+) as a cofactor.

It localises to the secreted. It catalyses the reaction Cyclizes part of a (1-&gt;4)-alpha-D-glucan chain by formation of a (1-&gt;4)-alpha-D-glucosidic bond.. This Paenibacillus macerans (Bacillus macerans) protein is Cyclomaltodextrin glucanotransferase (cgtM).